The chain runs to 99 residues: Small ribosomal subunit protein bS6 (99 aa).

It belongs to the bacterial ribosomal protein bS6 family.

Binds together with bS18 to 16S ribosomal RNA. The chain is Small ribosomal subunit protein bS6 from Lactiplantibacillus plantarum (strain ATCC BAA-793 / NCIMB 8826 / WCFS1) (Lactobacillus plantarum).